The following is a 372-amino-acid chain: Queuine tRNA-ribosyltransferase (372 aa).

The active-site Proton acceptor is the Asp-92. Residues Asp-92 to Phe-96, Asp-146, Gln-188, and Gly-215 each bind substrate. The RNA binding stretch occupies residues Gly-246–Glu-252. Asp-265 functions as the Nucleophile in the catalytic mechanism. The segment at Thr-270–Arg-274 is RNA binding; important for wobble base 34 recognition. Zn(2+) is bound by residues Cys-303, Cys-305, Cys-308, and His-334.

This sequence belongs to the queuine tRNA-ribosyltransferase family. In terms of assembly, homodimer. Within each dimer, one monomer is responsible for RNA recognition and catalysis, while the other monomer binds to the replacement base PreQ1. Zn(2+) serves as cofactor.

It carries out the reaction 7-aminomethyl-7-carbaguanine + guanosine(34) in tRNA = 7-aminomethyl-7-carbaguanosine(34) in tRNA + guanine. It functions in the pathway tRNA modification; tRNA-queuosine biosynthesis. In terms of biological role, catalyzes the base-exchange of a guanine (G) residue with the queuine precursor 7-aminomethyl-7-deazaguanine (PreQ1) at position 34 (anticodon wobble position) in tRNAs with GU(N) anticodons (tRNA-Asp, -Asn, -His and -Tyr). Catalysis occurs through a double-displacement mechanism. The nucleophile active site attacks the C1' of nucleotide 34 to detach the guanine base from the RNA, forming a covalent enzyme-RNA intermediate. The proton acceptor active site deprotonates the incoming PreQ1, allowing a nucleophilic attack on the C1' of the ribose to form the product. After dissociation, two additional enzymatic reactions on the tRNA convert PreQ1 to queuine (Q), resulting in the hypermodified nucleoside queuosine (7-(((4,5-cis-dihydroxy-2-cyclopenten-1-yl)amino)methyl)-7-deazaguanosine). This chain is Queuine tRNA-ribosyltransferase, found in Prochlorococcus marinus (strain MIT 9303).